The sequence spans 155 residues: Interleukin-2 (155 aa).

An N-terminal signal peptide occupies residues 1-20; it reads MYKMQLVACIALSLVLITNS. T23 carries an O-linked (GalNAc...) threonine glycan. C77 and C125 are joined by a disulfide.

The protein belongs to the IL-2 family.

The protein localises to the secreted. Functionally, cytokine produced by activated CD4-positive helper T-cells and to a lesser extend activated CD8-positive T-cells and natural killer (NK) cells that plays pivotal roles in the immune response and tolerance. Binds to a receptor complex composed of either the high-affinity trimeric IL-2R (IL2RA/CD25, IL2RB/CD122 and IL2RG/CD132) or the low-affinity dimeric IL-2R (IL2RB and IL2RG). Interaction with the receptor leads to oligomerization and conformation changes in the IL-2R subunits resulting in downstream signaling starting with phosphorylation of JAK1 and JAK3. In turn, JAK1 and JAK3 phosphorylate the receptor to form a docking site leading to the phosphorylation of several substrates including STAT5. This process leads to activation of several pathways including STAT, phosphoinositide-3-kinase/PI3K and mitogen-activated protein kinase/MAPK pathways. Functions as a T-cell growth factor and can increase NK-cell cytolytic activity as well. Promotes strong proliferation of activated B-cells and subsequently immunoglobulin production. Plays a pivotal role in regulating the adaptive immune system by controlling the survival and proliferation of regulatory T-cells, which are required for the maintenance of immune tolerance. Moreover, participates in the differentiation and homeostasis of effector T-cell subsets, including Th1, Th2, Th17 as well as memory CD8-positive T-cells. In Dasypus novemcinctus (Nine-banded armadillo), this protein is Interleukin-2 (IL2).